A 296-amino-acid polypeptide reads, in one-letter code: Cytidine deaminase (296 aa).

CMP/dCMP-type deaminase domains are found at residues 47-167 (TEAE…FGPK) and 186-296 (DSAD…IDPV). Residue 88-90 (NLE) participates in substrate binding. A Zn(2+)-binding site is contributed by histidine 101. The Proton donor role is filled by glutamate 103. The Zn(2+) site is built by cysteine 128 and cysteine 131.

It belongs to the cytidine and deoxycytidylate deaminase family. Homodimer. Requires Zn(2+) as cofactor.

It carries out the reaction cytidine + H2O + H(+) = uridine + NH4(+). The catalysed reaction is 2'-deoxycytidine + H2O + H(+) = 2'-deoxyuridine + NH4(+). Its function is as follows. This enzyme scavenges exogenous and endogenous cytidine and 2'-deoxycytidine for UMP synthesis. The protein is Cytidine deaminase of Shewanella baltica (strain OS155 / ATCC BAA-1091).